A 118-amino-acid chain; its full sequence is Large ribosomal subunit protein uL18 (118 aa).

The disordered stretch occupies residues 1 to 25 (MISKPDKNKIRQKRHRRVRGKLSGT). The segment covering 10-20 (IRQKRHRRVRG) has biased composition (basic residues).

Belongs to the universal ribosomal protein uL18 family. As to quaternary structure, part of the 50S ribosomal subunit; part of the 5S rRNA/L5/L18/L25 subcomplex. Contacts the 5S and 23S rRNAs.

This is one of the proteins that bind and probably mediate the attachment of the 5S RNA into the large ribosomal subunit, where it forms part of the central protuberance. This is Large ribosomal subunit protein uL18 from Streptococcus pyogenes serotype M5 (strain Manfredo).